Consider the following 201-residue polypeptide: ATP-dependent Clp protease proteolytic subunit (201 aa).

S98 (nucleophile) is an active-site residue. Residue H123 is part of the active site.

This sequence belongs to the peptidase S14 family. Fourteen ClpP subunits assemble into 2 heptameric rings which stack back to back to give a disk-like structure with a central cavity, resembling the structure of eukaryotic proteasomes.

The protein localises to the cytoplasm. The enzyme catalyses Hydrolysis of proteins to small peptides in the presence of ATP and magnesium. alpha-casein is the usual test substrate. In the absence of ATP, only oligopeptides shorter than five residues are hydrolyzed (such as succinyl-Leu-Tyr-|-NHMec, and Leu-Tyr-Leu-|-Tyr-Trp, in which cleavage of the -Tyr-|-Leu- and -Tyr-|-Trp bonds also occurs).. Cleaves peptides in various proteins in a process that requires ATP hydrolysis. Has a chymotrypsin-like activity. Plays a major role in the degradation of misfolded proteins. The protein is ATP-dependent Clp protease proteolytic subunit of Rickettsia conorii (strain ATCC VR-613 / Malish 7).